A 142-amino-acid polypeptide reads, in one-letter code: Secreted RxLR effector protein 161 (142 aa).

Positions 1–27 (MKNVPYLSAVGAIMYLMVVTRPDLAAA) are cleaved as a signal peptide. A RxLR motif is present at residues 48 to 51 (RVLR).

Belongs to the RxLR effector family.

It localises to the secreted. The protein localises to the host chloroplast envelope. It is found in the host nucleus. Its function is as follows. Secreted effector that completely suppresses the host cell death induced by cell death-inducing proteins. The chain is Secreted RxLR effector protein 161 from Plasmopara viticola (Downy mildew of grapevine).